A 472-amino-acid chain; its full sequence is D-inositol 3-phosphate glycosyltransferase (472 aa).

Histidine 48 is a binding site for 1D-myo-inositol 3-phosphate. UDP-N-acetyl-alpha-D-glucosamine contacts are provided by residues 54-55 (QP) and glycine 62. 1D-myo-inositol 3-phosphate is bound by residues 59 to 64 (DAGGMN), lysine 117, tyrosine 150, threonine 174, and arginine 194. UDP-N-acetyl-alpha-D-glucosamine is bound by residues arginine 282, lysine 287, and valine 348. Mg(2+) contacts are provided by phenylalanine 357, arginine 358, and alanine 360. UDP-N-acetyl-alpha-D-glucosamine is bound by residues glutamate 370 and glutamate 378. Mg(2+) is bound at residue threonine 384.

Belongs to the glycosyltransferase group 1 family. MshA subfamily. In terms of assembly, homodimer.

It catalyses the reaction 1D-myo-inositol 3-phosphate + UDP-N-acetyl-alpha-D-glucosamine = 1D-myo-inositol 2-acetamido-2-deoxy-alpha-D-glucopyranoside 3-phosphate + UDP + H(+). Its function is as follows. Catalyzes the transfer of a N-acetyl-glucosamine moiety to 1D-myo-inositol 3-phosphate to produce 1D-myo-inositol 2-acetamido-2-deoxy-glucopyranoside 3-phosphate in the mycothiol biosynthesis pathway. The chain is D-inositol 3-phosphate glycosyltransferase from Streptomyces griseus subsp. griseus (strain JCM 4626 / CBS 651.72 / NBRC 13350 / KCC S-0626 / ISP 5235).